The chain runs to 546 residues: Protein HydE (546 aa).

This Wolinella succinogenes (strain ATCC 29543 / DSM 1740 / CCUG 13145 / JCM 31913 / LMG 7466 / NCTC 11488 / FDC 602W) (Vibrio succinogenes) protein is Protein HydE (hydE).